Reading from the N-terminus, the 201-residue chain is RILP-like protein 2 (201 aa).

The RH1 domain maps to 14-108; it reads SPEMALDKDP…LRDGPQMGVG (95 aa). The stretch at 67-155 forms a coiled coil; that stretch reads LEMLEALVNQ…AQDELQCYKS (89 aa). Positions 121 to 197 constitute an RH2 domain; sequence RPRFTLQELR…TVKSLFSFKQ (77 aa). The tract at residues 175-201 is disordered; sequence TSSPRSNASKEKSTVKSLFSFKQGKNT.

It belongs to the RILPL family.

The protein localises to the cytoplasm. It is found in the cytosol. It localises to the cytoskeleton. Its subcellular location is the microtubule organizing center. The protein resides in the centrosome. The protein localises to the cell projection. It is found in the cilium. In terms of biological role, involved in cell shape and neuronal morphogenesis, positively regulating the establishment and maintenance of dendritic spines. Plays a role in cellular protein transport. This Xenopus laevis (African clawed frog) protein is RILP-like protein 2 (rilpl2).